Reading from the N-terminus, the 165-residue chain is Choriogonadotropin subunit beta (165 aa).

The N-terminal stretch at 1–20 (METLQGLLLWLLLSMGGAQA) is a signal peptide. Cystine bridges form between Cys-29/Cys-77, Cys-43/Cys-92, Cys-46/Cys-130, Cys-54/Cys-108, Cys-58/Cys-110, and Cys-113/Cys-120. N-linked (GlcNAc...) asparagine glycans are attached at residues Asn-33 and Asn-50. A disordered region spans residues 131-165 (DDPNLQASSSSKDPPPSPPSPSRLLEPAGTPFLPQ). O-linked (GalNAc...) serine glycans are attached at residues Ser-141, Ser-147, and Ser-152.

Belongs to the glycoprotein hormones subunit beta family. In terms of assembly, heterodimer of a common alpha chain and a unique beta chain which confers biological specificity to thyrotropin, lutropin, follitropin and gonadotropin. As to expression, placenta.

The protein localises to the secreted. In terms of biological role, stimulates the ovaries to synthesize the steroids that are essential for the maintenance of pregnancy. The polypeptide is Choriogonadotropin subunit beta (CGB) (Papio anubis (Olive baboon)).